Here is a 116-residue protein sequence, read N- to C-terminus: Small ribosomal subunit protein bS16 (116 aa).

This sequence belongs to the bacterial ribosomal protein bS16 family.

The chain is Small ribosomal subunit protein bS16 from Chlamydia muridarum (strain MoPn / Nigg).